The chain runs to 204 residues: Acyl-homoserine-lactone synthase (204 aa).

This sequence belongs to the autoinducer synthase family.

The enzyme catalyses a fatty acyl-[ACP] + S-adenosyl-L-methionine = an N-acyl-L-homoserine lactone + S-methyl-5'-thioadenosine + holo-[ACP] + H(+). Functionally, required for the synthesis of acyl-HSL autoinducers that bind to SolR. This chain is Acyl-homoserine-lactone synthase (solI), found in Ralstonia nicotianae (strain ATCC BAA-1114 / GMI1000) (Ralstonia solanacearum).